An 86-amino-acid chain; its full sequence is Putative membrane protein insertion efficiency factor (86 aa).

Residues 66-86 (AGGHDPVPPVPPQRYPSAQEH) are disordered.

The protein belongs to the UPF0161 family.

It is found in the cell inner membrane. Could be involved in insertion of integral membrane proteins into the membrane. The protein is Putative membrane protein insertion efficiency factor of Nitratidesulfovibrio vulgaris (strain ATCC 29579 / DSM 644 / CCUG 34227 / NCIMB 8303 / VKM B-1760 / Hildenborough) (Desulfovibrio vulgaris).